We begin with the raw amino-acid sequence, 637 residues long: Transcription factor PHYTOCHROME INTERACTING FACTOR-LIKE 15 (637 aa).

A compositionally biased stretch (gly residues) spans 35–46; it reads FFGGTGGGGGGS. Disordered stretches follow at residues 35 to 54, 146 to 213, and 356 to 397; these read FFGG…QERQ, ASLP…EGVM, and ECSA…RRRR. Residues 149–170 show a composition bias toward polar residues; it reads PASNHNGATNNRNAPVATTTTR. Positions 384–397 are basic motif; the sequence is RTAEVHNLSERRRR. Residues 384-397 are compositionally biased toward basic and acidic residues; that stretch reads RTAEVHNLSERRRR. In terms of domain architecture, bHLH spans 384-433; sequence RTAEVHNLSERRRRDRINEKMRALQELIPNCNKIDKASMLDEAIEYLKTL. A helix-loop-helix motif region spans residues 398–433; the sequence is DRINEKMRALQELIPNCNKIDKASMLDEAIEYLKTL. The disordered stretch occupies residues 601–637; the sequence is GDNENFRIPSSAQTKSSQFSDGTGKGTNARERDGAET. The segment covering 608 to 621 has biased composition (polar residues); that stretch reads IPSSAQTKSSQFSD. Residues 628–637 show a composition bias toward basic and acidic residues; it reads NARERDGAET.

This sequence belongs to the bHLH protein family. As to quaternary structure, interacts with LF and PRR1.

The protein resides in the nucleus. Transcription factor that may act as negative regulator of phyB-dependent light signal transduction. The protein is Transcription factor PHYTOCHROME INTERACTING FACTOR-LIKE 15 of Oryza sativa subsp. japonica (Rice).